We begin with the raw amino-acid sequence, 143 residues long: 6,7-dimethyl-8-ribityllumazine synthase (143 aa).

Residues phenylalanine 13, 45-47 (TFD), and 69-71 (CVI) contribute to the 5-amino-6-(D-ribitylamino)uracil site. 74–75 (ET) lines the (2S)-2-hydroxy-3-oxobutyl phosphate pocket. The active-site Proton donor is histidine 77. Leucine 102 contacts 5-amino-6-(D-ribitylamino)uracil. Position 117 (arginine 117) interacts with (2S)-2-hydroxy-3-oxobutyl phosphate.

It belongs to the DMRL synthase family.

It carries out the reaction (2S)-2-hydroxy-3-oxobutyl phosphate + 5-amino-6-(D-ribitylamino)uracil = 6,7-dimethyl-8-(1-D-ribityl)lumazine + phosphate + 2 H2O + H(+). It functions in the pathway cofactor biosynthesis; riboflavin biosynthesis; riboflavin from 2-hydroxy-3-oxobutyl phosphate and 5-amino-6-(D-ribitylamino)uracil: step 1/2. Functionally, catalyzes the formation of 6,7-dimethyl-8-ribityllumazine by condensation of 5-amino-6-(D-ribitylamino)uracil with 3,4-dihydroxy-2-butanone 4-phosphate. This is the penultimate step in the biosynthesis of riboflavin. In Archaeoglobus fulgidus (strain ATCC 49558 / DSM 4304 / JCM 9628 / NBRC 100126 / VC-16), this protein is 6,7-dimethyl-8-ribityllumazine synthase.